The sequence spans 232 residues: Flavin-dependent thymidylate synthase (232 aa).

Residues 1–204 (MKIALLQHTP…PTIFRDAGPG (204 aa)) form the ThyX domain. Residues Ser55, 79 to 81 (RHR), and Gln87 each bind FAD. DUMP-binding positions include 76–79 (QLVR), 87–91 (QQSQR), and Arg143. The short motif at 79 to 89 (RHRIASYSQQS) is the ThyX motif element. Residues 159–161 (NAR) and His165 contribute to the FAD site. Arg170 is a dUMP binding site. The active-site Involved in ionization of N3 of dUMP, leading to its activation is the Arg170.

This sequence belongs to the thymidylate synthase ThyX family. In terms of assembly, homotetramer. The cofactor is FAD.

It carries out the reaction dUMP + (6R)-5,10-methylene-5,6,7,8-tetrahydrofolate + NADPH + H(+) = dTMP + (6S)-5,6,7,8-tetrahydrofolate + NADP(+). Its pathway is pyrimidine metabolism; dTTP biosynthesis. Catalyzes the reductive methylation of 2'-deoxyuridine-5'-monophosphate (dUMP) to 2'-deoxythymidine-5'-monophosphate (dTMP) while utilizing 5,10-methylenetetrahydrofolate (mTHF) as the methyl donor, and NADPH and FADH(2) as the reductant. This Geobacter sulfurreducens (strain ATCC 51573 / DSM 12127 / PCA) protein is Flavin-dependent thymidylate synthase.